Here is a 328-residue protein sequence, read N- to C-terminus: Arylacetonitrilase (328 aa).

The CN hydrolase domain occupies 5–278 (VRVAVTQAEP…EGIIYADLDL (274 aa)). Glutamate 45 (proton acceptor) is an active-site residue. Lysine 125 is an active-site residue. Cysteine 160 (nucleophile) is an active-site residue.

Belongs to the carbon-nitrogen hydrolase superfamily. Nitrilase family.

It carries out the reaction a nitrile + 2 H2O = a carboxylate + NH4(+). It catalyses the reaction 4-chlorophenylacetonitrile + 2 H2O = 4-chlorophenylacetate + NH4(+). In terms of biological role, nitrilase that hydrolyzes preferentially phenylacetonitrile and (R,S)-mandelonitrile. Also acts on dinitriles like phenylenediacetonitriles (PDAs) 1,2-PDA, 1,3-PDA, and 1,4-PDA, and cyanophenyl acetonitriles (CPAs) 2-CPA and 4-CPA. The chain is Arylacetonitrilase (nit2) from Aspergillus kawachii (strain NBRC 4308) (White koji mold).